The sequence spans 449 residues: Glutamyl-tRNA reductase (449 aa).

Substrate contacts are provided by residues 48–51, S99, 104–106, and Q110; these read TCNR and EDQ. The active-site Nucleophile is the C49. An NADP(+)-binding site is contributed by 179-184; that stretch reads GAGEIG.

The protein belongs to the glutamyl-tRNA reductase family. Homodimer.

It catalyses the reaction (S)-4-amino-5-oxopentanoate + tRNA(Glu) + NADP(+) = L-glutamyl-tRNA(Glu) + NADPH + H(+). The protein operates within porphyrin-containing compound metabolism; protoporphyrin-IX biosynthesis; 5-aminolevulinate from L-glutamyl-tRNA(Glu): step 1/2. Its function is as follows. Catalyzes the NADPH-dependent reduction of glutamyl-tRNA(Glu) to glutamate 1-semialdehyde (GSA). This is Glutamyl-tRNA reductase from Methanosarcina barkeri (strain Fusaro / DSM 804).